Reading from the N-terminus, the 494-residue chain is Guanosine-5'-triphosphate,3'-diphosphate pyrophosphatase (494 aa).

Belongs to the GppA/Ppx family. GppA subfamily.

It catalyses the reaction guanosine 3'-diphosphate 5'-triphosphate + H2O = guanosine 3',5'-bis(diphosphate) + phosphate + H(+). It functions in the pathway purine metabolism; ppGpp biosynthesis; ppGpp from GTP: step 2/2. In terms of biological role, catalyzes the conversion of pppGpp to ppGpp. Guanosine pentaphosphate (pppGpp) is a cytoplasmic signaling molecule which together with ppGpp controls the 'stringent response', an adaptive process that allows bacteria to respond to amino acid starvation, resulting in the coordinated regulation of numerous cellular activities. The chain is Guanosine-5'-triphosphate,3'-diphosphate pyrophosphatase from Escherichia coli O139:H28 (strain E24377A / ETEC).